Reading from the N-terminus, the 606-residue chain is MAIKQLSETLINQIAAGEVIERPSSATKELVENAIDAGATRIEIATAGGGKGLVRITDNGSGMSPADLELAVRRHCTSKISTTLDDIRTLGFRGEALPSIGSVAKLTITSRQQGAEQGSVISVTGGKVSDVRPAASNAGTIVEVRDLFFATPARLKFLKTERAEAAAITEVVKRMAIAFPHIRFVLSGTDRSTLEIPSTGDDHLARMAQILGAEFKDNAIEIDAGREDVTLTGFAGVPTFNRGNSSHQYVFVNGRPVQDKLLLSAIRGAYAETVPHGRYPVAVLSITLDPAFVDVNVHPAKSDVRFRDPGLIRGLIVGAIRQALTRDGDRAATTGASQMMNAFRPGYSPSGLRPSPSATWSAATSPSRPLAVSGDMQFAEAAQSRFSDITMPTARAEPREAYEASQSPSPEPVLYPLGAARAQLHENYIIAQTENGLVIVDQHAAHERLVFEEMRNALHSRRPPSQVLLIPEIIDLPEEDCDRLMDHAAGFDALGLVIERFGPGAIAVRETPAMLGEVNVQGLVRQLADEIAEWDAASTLANKLEYVAATMACHGSVRSGRRMRPEEMNALLRQMENTPGSGQCNHGRPTYIELKLSDIERLFGRS.

Positions 340-366 are disordered; the sequence is MNAFRPGYSPSGLRPSPSATWSAATSP. A compositionally biased stretch (low complexity) spans 353 to 366; sequence RPSPSATWSAATSP.

It belongs to the DNA mismatch repair MutL/HexB family.

In terms of biological role, this protein is involved in the repair of mismatches in DNA. It is required for dam-dependent methyl-directed DNA mismatch repair. May act as a 'molecular matchmaker', a protein that promotes the formation of a stable complex between two or more DNA-binding proteins in an ATP-dependent manner without itself being part of a final effector complex. The chain is DNA mismatch repair protein MutL from Agrobacterium fabrum (strain C58 / ATCC 33970) (Agrobacterium tumefaciens (strain C58)).